Reading from the N-terminus, the 427-residue chain is Glutamate-1-semialdehyde 2,1-aminomutase (427 aa).

N6-(pyridoxal phosphate)lysine is present on lysine 265.

The protein belongs to the class-III pyridoxal-phosphate-dependent aminotransferase family. HemL subfamily. As to quaternary structure, homodimer. Requires pyridoxal 5'-phosphate as cofactor.

It localises to the cytoplasm. It catalyses the reaction (S)-4-amino-5-oxopentanoate = 5-aminolevulinate. The protein operates within porphyrin-containing compound metabolism; protoporphyrin-IX biosynthesis; 5-aminolevulinate from L-glutamyl-tRNA(Glu): step 2/2. The sequence is that of Glutamate-1-semialdehyde 2,1-aminomutase from Pseudomonas fluorescens (strain SBW25).